The following is a 178-amino-acid chain: CASP-like protein 2A2 (178 aa).

The Cytoplasmic segment spans residues 1–22 (MDKTDQTAIDESALVLNRTEKS). A helical transmembrane segment spans residues 23 to 43 (AEAVLRVASMALSITGLVIMI). Topologically, residues 44–69 (KNSISNEFGSVSYSNIGAFMYLVSAN) are extracellular. A helical membrane pass occupies residues 70–90 (GVCAAYSLLSALAILALPCPI). Topologically, residues 91–96 (SKVQVR) are cytoplasmic. The chain crosses the membrane as a helical span at residues 97 to 117 (TLFLLDQVVTYVVLAAGAVSA). The Extracellular portion of the chain corresponds to 118 to 145 (ETVYLAYYGNIPITWSSACDSYGSFCHN). The helical transmembrane segment at 146 to 166 (ALISVVFTFVVSLLYMLLSLI) threads the bilayer. The Cytoplasmic segment spans residues 167-178 (SSYRLFTRFEAP).

The protein belongs to the Casparian strip membrane proteins (CASP) family. Homodimer and heterodimers. Mostly expressed in flowers and buds and, to a lower extent, in roots and yellow siliques. Localized in the floral organ abscission zone.

It is found in the cell membrane. Its function is as follows. Involved in floral organ shedding. The polypeptide is CASP-like protein 2A2 (Arabidopsis thaliana (Mouse-ear cress)).